A 495-amino-acid chain; its full sequence is Sulfhydryl oxidase 2 (495 aa).

Positions 1 to 15 (MSLVHLLLFAGLVIA) are cleaved as a signal peptide. The 136-residue stretch at 29-164 (EISDQKDKAV…LLNWINKQIG (136 aa)) folds into the Thioredoxin domain. N-linked (GlcNAc...) asparagine glycosylation is present at Asn41. Active-site nucleophile residues include Cys66 and Cys69. An intrachain disulfide couples Cys66 to Cys69. Residues Asn182, Asn257, Asn266, and Asn292 are each glycosylated (N-linked (GlcNAc...) asparagine). Cys287 and Cys299 are disulfide-bonded. Residues 290-392 (SKNDTRGFSC…GDPKFPKIIW (103 aa)) form the ERV/ALR sulfhydryl oxidase domain. Residues Arg295, Trp302, His306, Glu336, His340, 363–370 (WSTHNKVN), Lys389, and Trp392 contribute to the FAD site. A disulfide bridge connects residues Cys334 and Cys337. Cys398 and Cys401 are joined by a disulfide.

It depends on FAD as a cofactor.

It localises to the secreted. It catalyses the reaction 2 R'C(R)SH + O2 = R'C(R)S-S(R)CR' + H2O2. Functionally, catalyzes the oxidation of sulfhydryl groups in peptide and protein thiols to disulfides with the reduction of oxygen to hydrogen peroxide. May contribute to disulfide bond formation in a variety of secreted proteins. This is Sulfhydryl oxidase 2 (QSOX2) from Arabidopsis thaliana (Mouse-ear cress).